We begin with the raw amino-acid sequence, 323 residues long: Malate dehydrogenase (323 aa).

11–17 (GAAGQIA) provides a ligand contact to NAD(+). The substrate site is built by Arg92 and Arg98. NAD(+) is bound by residues Asn105, Gln112, and 129–131 (VGN). Residues Asn131 and Arg162 each contribute to the substrate site. His187 functions as the Proton acceptor in the catalytic mechanism.

It belongs to the LDH/MDH superfamily. MDH type 2 family.

It catalyses the reaction (S)-malate + NAD(+) = oxaloacetate + NADH + H(+). Its function is as follows. Catalyzes the reversible oxidation of malate to oxaloacetate. This chain is Malate dehydrogenase, found in Corynebacterium efficiens (strain DSM 44549 / YS-314 / AJ 12310 / JCM 11189 / NBRC 100395).